The chain runs to 654 residues: Integrator complex subunit 9 (654 aa).

Residues methionine 1, arginine 2, threonine 18, phenylalanine 19, arginine 504, lysine 508, and arginine 509 each coordinate 1D-myo-inositol hexakisphosphate.

The protein belongs to the metallo-beta-lactamase superfamily. RNA-metabolizing metallo-beta-lactamase-like family. INTS9 subfamily. Belongs to the multiprotein complex Integrator, at least composed of IntS1, IntS2, IntS3, IntS4, omd/IntS5, IntS6, defl/IntS7, IntS8, IntS9, IntS10, IntS11, IntS12, asun/IntS13, IntS14 and IntS15. The core complex associates with protein phosphatase 2A subunits mts/PP2A and Pp2A-29B, to form the Integrator-PP2A (INTAC) complex. Within the complex, interacts with IntS1 and IntS12. IntS9 is part of the RNA endonuclease subcomplex, composed of IntS4, IntS9, IntS11 and inositol hexakisphosphate (InsP6).

Its subcellular location is the nucleus. It localises to the cytoplasm. The protein resides in the cytosol. Component of the integrator complex, a multiprotein complex that terminates RNA polymerase II (Pol II) transcription in the promoter-proximal region of genes. The integrator complex provides a quality checkpoint during transcription elongation by driving premature transcription termination of transcripts that are unfavorably configured for transcriptional elongation: the complex terminates transcription by (1) catalyzing dephosphorylation of the C-terminal domain (CTD) of Pol II subunit Polr2A/Rbp1 and Spt5, and (2) degrading the exiting nascent RNA transcript via endonuclease activity. The integrator complex is also involved in the 3'-end processing of the U7 snRNA, and also the spliceosomal snRNAs U1, U2, U4 and U5. This chain is Integrator complex subunit 9, found in Drosophila melanogaster (Fruit fly).